The primary structure comprises 130 residues: Fluoride-specific ion channel FluC (130 aa).

4 helical membrane passes run 7–27 (VLAICIGASLGALARWRLGLW), 36–56 (LGTLAANLIGGYLIGICVAVF), 69–89 (ALITGFLGGLTTFSSFSAEVV), and 99–119 (LGFGTAGLHLFGSLLLTLAGI). Positions 76 and 79 each coordinate Na(+).

This sequence belongs to the fluoride channel Fluc/FEX (TC 1.A.43) family.

It is found in the cell inner membrane. The enzyme catalyses fluoride(in) = fluoride(out). Its activity is regulated as follows. Na(+) is not transported, but it plays an essential structural role and its presence is essential for fluoride channel function. Functionally, fluoride-specific ion channel. Important for reducing fluoride concentration in the cell, thus reducing its toxicity. This Albidiferax ferrireducens (strain ATCC BAA-621 / DSM 15236 / T118) (Rhodoferax ferrireducens) protein is Fluoride-specific ion channel FluC.